We begin with the raw amino-acid sequence, 369 residues long: Anhydro-N-acetylmuramic acid kinase (369 aa).

12–19 (GTSLDGVD) contacts ATP.

Belongs to the anhydro-N-acetylmuramic acid kinase family.

It catalyses the reaction 1,6-anhydro-N-acetyl-beta-muramate + ATP + H2O = N-acetyl-D-muramate 6-phosphate + ADP + H(+). Its pathway is amino-sugar metabolism; 1,6-anhydro-N-acetylmuramate degradation. The protein operates within cell wall biogenesis; peptidoglycan recycling. In terms of biological role, catalyzes the specific phosphorylation of 1,6-anhydro-N-acetylmuramic acid (anhMurNAc) with the simultaneous cleavage of the 1,6-anhydro ring, generating MurNAc-6-P. Is required for the utilization of anhMurNAc either imported from the medium or derived from its own cell wall murein, and thus plays a role in cell wall recycling. The chain is Anhydro-N-acetylmuramic acid kinase from Escherichia coli O6:K15:H31 (strain 536 / UPEC).